A 118-amino-acid polypeptide reads, in one-letter code: Large ribosomal subunit protein bL19 (118 aa).

This sequence belongs to the bacterial ribosomal protein bL19 family.

Its function is as follows. This protein is located at the 30S-50S ribosomal subunit interface and may play a role in the structure and function of the aminoacyl-tRNA binding site. In Salinibacter ruber (strain DSM 13855 / M31), this protein is Large ribosomal subunit protein bL19.